Reading from the N-terminus, the 802-residue chain is ATP-dependent zinc metalloprotease FTSH 3, mitochondrial (802 aa).

The transit peptide at 1–21 (MSLSSLSRALARSARSSRQRQ) directs the protein to the mitochondrion. Over residues 1–23 (MSLSSLSRALARSARSSRQRQGS) the composition is skewed to low complexity. Disordered stretches follow at residues 1–33 (MSLS…GLRA) and 85–120 (DKSK…SGDQ). The segment covering 85–113 (DKSKKNHGKHSEEENKGKGDESDKSDSKK) has biased composition (basic and acidic residues). The chain crosses the membrane as a helical span at residues 133–153 (MIAPLFLFGLLLLSASASSSE). 360-367 (GPPGTGKT) contributes to the ATP binding site. Histidine 585 is a Zn(2+) binding site. The active site involves glutamate 586. Residues histidine 589 and aspartate 661 each contribute to the Zn(2+) site. The disordered stretch occupies residues 773 to 802 (KQGFQDEDSNRNAELSNADGASSLGEAVAS).

It in the N-terminal section; belongs to the AAA ATPase family. The protein in the C-terminal section; belongs to the peptidase M41 family. It depends on Zn(2+) as a cofactor.

It is found in the mitochondrion inner membrane. In terms of biological role, probable ATP-dependent zinc metallopeptidase. In Oryza sativa subsp. japonica (Rice), this protein is ATP-dependent zinc metalloprotease FTSH 3, mitochondrial (FTSH3).